The chain runs to 422 residues: Proline--tRNA ligase (422 aa).

The protein belongs to the class-II aminoacyl-tRNA synthetase family. ProS type 2 subfamily. As to quaternary structure, homodimer.

The protein resides in the cytoplasm. The catalysed reaction is tRNA(Pro) + L-proline + ATP = L-prolyl-tRNA(Pro) + AMP + diphosphate. Its function is as follows. Catalyzes the attachment of proline to tRNA(Pro) in a two-step reaction: proline is first activated by ATP to form Pro-AMP and then transferred to the acceptor end of tRNA(Pro). The sequence is that of Proline--tRNA ligase from Wolbachia pipientis wMel.